The sequence spans 247 residues: 2,3-bisphosphoglycerate-dependent phosphoglycerate mutase (247 aa).

Residues 8–15, 21–22, R60, 87–90, K98, 114–115, and 183–184 each bind substrate; these read RHGESTWN, TG, ERHY, RR, and GN. Residue H9 is the Tele-phosphohistidine intermediate of the active site. E87 acts as the Proton donor/acceptor in catalysis.

This sequence belongs to the phosphoglycerate mutase family. BPG-dependent PGAM subfamily. Homodimer.

It catalyses the reaction (2R)-2-phosphoglycerate = (2R)-3-phosphoglycerate. The protein operates within carbohydrate degradation; glycolysis; pyruvate from D-glyceraldehyde 3-phosphate: step 3/5. Catalyzes the interconversion of 2-phosphoglycerate and 3-phosphoglycerate. The protein is 2,3-bisphosphoglycerate-dependent phosphoglycerate mutase of Acidovorax ebreus (strain TPSY) (Diaphorobacter sp. (strain TPSY)).